The following is a 332-amino-acid chain: GLIPR1-like protein 2 (332 aa).

Residues 57 to 191 (LHNELRGTVF…THAALFICNY (135 aa)) enclose the SCP domain. Asn145 is a glycosylation site (N-linked (GlcNAc...) asparagine). Residues 253–273 (IFILFLRVASLLLCVIVVLIV) form a helical membrane-spanning segment. The tract at residues 293 to 332 (EGKTEVEIVMEEGEGEGEGGEGEGEGEEKEEEEMLEEDEQ) is disordered. The span at 300–332 (IVMEEGEGEGEGGEGEGEGEEKEEEEMLEEDEQ) shows a compositional bias: acidic residues.

This sequence belongs to the CRISP family.

The protein localises to the membrane. In Mus musculus (Mouse), this protein is GLIPR1-like protein 2 (Glipr1l2).